A 365-amino-acid chain; its full sequence is 3-isopropylmalate dehydrogenase (365 aa).

78–91 serves as a coordination point for NAD(+); it reads GYKWDSLPRSQRPE. Residues arginine 98, arginine 108, arginine 136, and aspartate 226 each coordinate substrate. Mg(2+)-binding residues include aspartate 226, aspartate 250, and aspartate 254. 284 to 296 contributes to the NAD(+) binding site; sequence GSAPDIAGQDKAN.

It belongs to the isocitrate and isopropylmalate dehydrogenases family. LeuB type 1 subfamily. Homodimer. Requires Mg(2+) as cofactor. Mn(2+) serves as cofactor.

Its subcellular location is the cytoplasm. The catalysed reaction is (2R,3S)-3-isopropylmalate + NAD(+) = 4-methyl-2-oxopentanoate + CO2 + NADH. It functions in the pathway amino-acid biosynthesis; L-leucine biosynthesis; L-leucine from 3-methyl-2-oxobutanoate: step 3/4. Its function is as follows. Catalyzes the oxidation of 3-carboxy-2-hydroxy-4-methylpentanoate (3-isopropylmalate) to 3-carboxy-4-methyl-2-oxopentanoate. The product decarboxylates to 4-methyl-2 oxopentanoate. The protein is 3-isopropylmalate dehydrogenase of Synechococcus elongatus (strain ATCC 33912 / PCC 7942 / FACHB-805) (Anacystis nidulans R2).